We begin with the raw amino-acid sequence, 81 residues long: Alpha-toxin Ac1 (81 aa).

Positions 1–17 are cleaved as a signal peptide; it reads YIVMISLALVVMIGVES. Positions 19–80 constitute an LCN-type CS-alpha/beta domain; it reads RDGYIVYPNN…PIKDPSQKCT (62 aa). 4 disulfide bridges follow: cysteine 29–cysteine 79, cysteine 33–cysteine 51, cysteine 37–cysteine 61, and cysteine 41–cysteine 63.

It belongs to the long (4 C-C) scorpion toxin superfamily. Sodium channel inhibitor family. Alpha subfamily. In terms of tissue distribution, expressed by the venom gland.

It localises to the secreted. Its function is as follows. Alpha toxins bind voltage-independently at site-3 of sodium channels (Nav) and inhibit the inactivation of the activated channels, thereby blocking neuronal transmission. The chain is Alpha-toxin Ac1 from Androctonus crassicauda (Arabian fat-tailed scorpion).